The sequence spans 661 residues: MPNSEEVMAKERVVSPSAEFKKNANISLKNYKSLYKESIENPNKFWAREANRLIWFKKWTKVLSHDFKNAKVEWFKGGKLNVSYNCLDRHISTPLKNKAALIWEGDNPTESRVLTYYDVYREVNRFANILKKFGVKKGDRVLVYLPMIPELAITILACTRIGAIHSVVFGGFSPEALQSRIDDCKPKLVVTADGGFRGGKPIELKKNVDLALEKSKEKVKTVIVVRRTGNESGLTWKDGQDYWYHFLMNDPELSAYCKPEEMDAEDPLFILYTSGSTGKPKGVLHTTGGYLLGANLTFHYVFDIKPEDTYWCTADIGWVTGHSYLVYGPLSNGASSVMFEGVPSYPDAGRFWDVIDKYGVNIFYTAPTAIRALMREGLNHIQKRDLSSLRLLGSVGEPINPEAWEWYFKNIGKGKCPIVDTWWQTETGSIMITALPGAIPQKPGSATLPFFGVQPVLVDNDGKEITDKGEVSGNLCIKGPWPSMMRGVYGDPKRFFETYFSQFKGYYFTGDGARRDKDGYFWITGRVDDVINVSGHRIGSAEVESALVENKSVAEAAVVGFPHDIKGQGIYAYVTVKEGVTTNDVLKKELISTVEKMIGKIARPDVIHWAPGLPKTRSGKIMRRILRKIASGEFEGLGDTSTLADPSVVQKLIEDKKKFHS.

Residues 197–200 (RGGK) and threonine 320 each bind CoA. ATP is bound by residues 396–398 (GEP), 420–425 (DTWWQT), aspartate 511, and arginine 526. Serine 534 contacts CoA. Arginine 537 provides a ligand contact to ATP. Mg(2+)-binding residues include valine 548 and valine 553. Lysine 620 carries the N6-acetyllysine modification.

The protein belongs to the ATP-dependent AMP-binding enzyme family. Mg(2+) is required as a cofactor. Post-translationally, acetylated. Deacetylation by the SIR2-homolog deacetylase activates the enzyme.

The catalysed reaction is acetate + ATP + CoA = acetyl-CoA + AMP + diphosphate. Functionally, catalyzes the conversion of acetate into acetyl-CoA (AcCoA), an essential intermediate at the junction of anabolic and catabolic pathways. AcsA undergoes a two-step reaction. In the first half reaction, AcsA combines acetate with ATP to form acetyl-adenylate (AcAMP) intermediate. In the second half reaction, it can then transfer the acetyl group from AcAMP to the sulfhydryl group of CoA, forming the product AcCoA. The sequence is that of Acetyl-coenzyme A synthetase from Leptospira interrogans serogroup Icterohaemorrhagiae serovar copenhageni (strain Fiocruz L1-130).